A 1316-amino-acid chain; its full sequence is Tetratricopeptide repeat protein 21B (1316 aa).

TPR repeat units lie at residues 108–141 (EKAL…SDGS), 145–178 (HVLK…GNDT), 180–211 (ALLG…FPSF), 285–323 (AQLF…NPQQ), 324–357 (SEFA…DETS), 492–525 (LQTV…NPSY), 563–596 (PLYH…PGMK), 617–650 (LSIF…FSGT), 722–755 (PRSF…NPKD), 757–789 (TLAS…GQKN), 791–822 (LCYD…EPVN), 831–864 (GRCQ…QARV), 884–917 (AEIC…CETD), 919–951 (KIML…DQDN), 952–985 (EAAT…KPDN), 1023–1056 (PGFQ…RDWG), 1197–1230 (EKSW…NRSC), 1232–1264 (KAYE…SNRT), and 1266–1299 (PAVG…HPTY).

This sequence belongs to the TTC21 family. Component of the IFT complex A (IFT-A) complex. IFT-A complex is divided into a core subcomplex composed of IFT122:IFT140:WDR19 which is associated with TULP3 and a peripheral subcomplex composed of IFT43:WDR35:TTC21B. Interacts directy with WDR35 and TTC21B. Interacts with TTC25.

The protein resides in the cytoplasm. The protein localises to the cytoskeleton. It localises to the cilium axoneme. Component of the IFT complex A (IFT-A), a complex required for retrograde ciliary transport and entry into cilia of G protein-coupled receptors (GPCRs). Essential for retrograde trafficking of IFT-1, IFT-B and GPCRs. Negatively modulates the SHH signal transduction. In Homo sapiens (Human), this protein is Tetratricopeptide repeat protein 21B.